The following is a 365-amino-acid chain: MRVMAPRTLILLLSGALALTETWAGSHSMRYFFTAVAPPGRGEPRFIAVGYVDDTQFVRFDSDAANTRGEPRAPWVEQEGPEYWDRETQKYKRQAQTDRVSLRKLRGYYNQSEDGSHTFQRMYGCDVGPDGRLQRGYDQLAYDGKDYIALNEDLRSWTAADTAAQITQRKWEAARWAERQRAYLEGLCVEWLRRYLENGKETLQRADPPKTHVTHHPISDHEATLRCWALGFYPAEITLTWQRDGEEQTQDIELVETRPAGDGTFQKWAAMVVPSGEEQRYTCHVQHKGLLEPLTLRWEPSSQPTIPIVGIVAGLAVLAVVFTGTVVAAVMCRRKSSGGKGGSCSQAACSNSAQGSDESLIACKA.

A signal peptide spans 1–24; sequence MRVMAPRTLILLLSGALALTETWA. The tract at residues 25–114 is alpha-1; it reads GSHSMRYFFT…LRGYYNQSED (90 aa). Over 25-308 the chain is Extracellular; sequence GSHSMRYFFT…EPSSQPTIPI (284 aa). An N-linked (GlcNAc...) asparagine glycan is attached at asparagine 110. The tract at residues 115–206 is alpha-2; it reads GSHTFQRMYG…ENGKETLQRA (92 aa). Intrachain disulfides connect cysteine 125-cysteine 188 and cysteine 227-cysteine 283. Residues 207 to 298 are alpha-3; that stretch reads DPPKTHVTHH…GLLEPLTLRW (92 aa). An Ig-like C1-type domain is found at 209–297; that stretch reads PKTHVTHHPI…KGLLEPLTLR (89 aa). Residues 299–308 form a connecting peptide region; the sequence is EPSSQPTIPI. A helical transmembrane segment spans residues 309 to 332; the sequence is VGIVAGLAVLAVVFTGTVVAAVMC. At 333–365 the chain is on the cytoplasmic side; the sequence is RRKSSGGKGGSCSQAACSNSAQGSDESLIACKA. Serine 356 and serine 359 each carry phosphoserine.

It belongs to the MHC class I family. Heterodimer of an alpha chain and a beta chain (beta-2-microglobulin).

The protein resides in the membrane. Its function is as follows. Involved in the presentation of foreign antigens to the immune system. The chain is Class I histocompatibility antigen, Gogo-C*0101/C*0102 alpha chain from Gorilla gorilla gorilla (Western lowland gorilla).